Reading from the N-terminus, the 360-residue chain is GTPase Obg (360 aa).

The region spanning 1–156 (MFVDSVEIII…KCVRLELKLI (156 aa)) is the Obg domain. In terms of domain architecture, OBG-type G spans 157–360 (ADIGLVGFPN…LKFVLLEALP (204 aa)). Residues 163–170 (GFPNAGKS), 188–192 (FTTLV), 210–213 (DIPG), 279–282 (NKCD), and 341–343 (SAV) contribute to the GTP site. Residues Ser-170 and Thr-190 each coordinate Mg(2+).

It belongs to the TRAFAC class OBG-HflX-like GTPase superfamily. OBG GTPase family. In terms of assembly, monomer. The cofactor is Mg(2+).

The protein resides in the cytoplasm. Its function is as follows. An essential GTPase which binds GTP, GDP and possibly (p)ppGpp with moderate affinity, with high nucleotide exchange rates and a fairly low GTP hydrolysis rate. Plays a role in control of the cell cycle, stress response, ribosome biogenesis and in those bacteria that undergo differentiation, in morphogenesis control. This is GTPase Obg from Helicobacter pylori (strain HPAG1).